The sequence spans 417 residues: MRDDQIFNLIEKEKLREKEHIELIASENFTSLEIRQAVGSVLTNKYAEGYPLNRYYGGCSFIDEIETLAILRAKELFGAKYANVQPHSGSQANMAAIMALINPGDRILGMQLSHGGHLTHGSRVNFSGIFFNTYFYGVSRDSELIDYDEVLKIARDCRPNLIIAGASSYSREIDFKKFREIADDVSAYLLCDIAHIAGLIVAGFHNSSIDVAHLTTSTTHKTLRGPRGGIILSGKDFNKLVTFNGKEKTLSNAVNSTVFPGTQGGPLVHVIAGKAIAFREALQENFKEYISKVIKNTKVMAEYFKSEGFRIVSGGTDNHLFLVDLSSLDLTGADAEKLLERVNITLNKNAIPFDKKSPALASGIRIGGAAITSRGLNESDSLNVAKFIVRALKTRSDIELKQIKKEVVRFIRDFDMP.

(6S)-5,6,7,8-tetrahydrofolate-binding positions include Leu112 and 116 to 118 (GHL). The residue at position 221 (Lys221) is an N6-(pyridoxal phosphate)lysine. Glu247 lines the (6S)-5,6,7,8-tetrahydrofolate pocket.

It belongs to the SHMT family. As to quaternary structure, homodimer. Pyridoxal 5'-phosphate is required as a cofactor.

It is found in the cytoplasm. The enzyme catalyses (6R)-5,10-methylene-5,6,7,8-tetrahydrofolate + glycine + H2O = (6S)-5,6,7,8-tetrahydrofolate + L-serine. The protein operates within one-carbon metabolism; tetrahydrofolate interconversion. It participates in amino-acid biosynthesis; glycine biosynthesis; glycine from L-serine: step 1/1. Its function is as follows. Catalyzes the reversible interconversion of serine and glycine with tetrahydrofolate (THF) serving as the one-carbon carrier. This reaction serves as the major source of one-carbon groups required for the biosynthesis of purines, thymidylate, methionine, and other important biomolecules. Also exhibits THF-independent aldolase activity toward beta-hydroxyamino acids, producing glycine and aldehydes, via a retro-aldol mechanism. This Borreliella afzelii (strain PKo) (Borrelia afzelii) protein is Serine hydroxymethyltransferase.